The chain runs to 356 residues: Serpentine receptor class epsilon-29 (356 aa).

7 helical membrane passes run 29–49, 61–81, 119–139, 161–181, 190–210, 251–271, and 281–301; these read IVEL…IYII, ILAI…LITI, LLIF…FGVL, LFIP…TSLA, FLAQ…YFFV, LVFV…ALFY, and FVEN…IFSV.

Belongs to the nematode receptor-like protein sre family.

The protein localises to the membrane. The chain is Serpentine receptor class epsilon-29 (sre-29) from Caenorhabditis elegans.